Reading from the N-terminus, the 206-residue chain is RILP-like protein 2 (206 aa).

The segment at 1-29 (MEEPPLREEEEEEEEDEAGPEGALGKSPL) is disordered. The span at 8-19 (EEEEEEEEDEAG) shows a compositional bias: acidic residues. Residues 19–108 (GPEGALGKSP…RREGSAAGPE (90 aa)) form the RH1 domain. The stretch at 67–159 (LEMLETLVNE…VQEELQCYKS (93 aa)) forms a coiled coil. The RH2 domain occupies 125-197 (RPRFTLQELR…KEEKTIIRKL (73 aa)). Residues 161-189 (LIPPREGPGGRREKEALFPRGSNANSNKE) are disordered. Positions 168-177 (PGGRREKEAL) are enriched in basic and acidic residues.

It belongs to the RILPL family. In terms of assembly, homodimer. Interacts with RAC1. Interacts (via N-terminus) with MYO5A, the interaction is required for its role in dendrite formation. Interacts with RAB8A; interaction is dependent on the phosphorylation of RAB8A on 'Thr-72'. Interacts with RAB10 and RAB12; interaction is dependent on the phosphorylation of 'Thr-73' on RAB10 and 'Ser-105' on RAB12.

It is found in the cytoplasm. The protein localises to the cytosol. It localises to the cytoskeleton. Its subcellular location is the microtubule organizing center. The protein resides in the centrosome. It is found in the cell projection. The protein localises to the cilium. Involved in cell shape and neuronal morphogenesis, positively regulating the establishment and maintenance of dendritic spines. Plays a role in cellular protein transport, including protein transport away from primary cilia. May function via activation of RAC1 and PAK1. This is RILP-like protein 2 (RILPL2) from Bos taurus (Bovine).